The primary structure comprises 306 residues: Lipoyl synthase 2 (306 aa).

Residues Cys49, Cys54, Cys60, Cys75, Cys79, Cys82, and Ser300 each contribute to the [4Fe-4S] cluster site. The 229-residue stretch at 61–289 (YAAGTATFLL…AEVACKLGFA (229 aa)) folds into the Radical SAM core domain.

This sequence belongs to the radical SAM superfamily. Lipoyl synthase family. Requires [4Fe-4S] cluster as cofactor.

It localises to the cytoplasm. It catalyses the reaction [[Fe-S] cluster scaffold protein carrying a second [4Fe-4S](2+) cluster] + N(6)-octanoyl-L-lysyl-[protein] + 2 oxidized [2Fe-2S]-[ferredoxin] + 2 S-adenosyl-L-methionine + 4 H(+) = [[Fe-S] cluster scaffold protein] + N(6)-[(R)-dihydrolipoyl]-L-lysyl-[protein] + 4 Fe(3+) + 2 hydrogen sulfide + 2 5'-deoxyadenosine + 2 L-methionine + 2 reduced [2Fe-2S]-[ferredoxin]. It participates in protein modification; protein lipoylation via endogenous pathway; protein N(6)-(lipoyl)lysine from octanoyl-[acyl-carrier-protein]: step 2/2. Catalyzes the radical-mediated insertion of two sulfur atoms into the C-6 and C-8 positions of the octanoyl moiety bound to the lipoyl domains of lipoate-dependent enzymes, thereby converting the octanoylated domains into lipoylated derivatives. This is Lipoyl synthase 2 from Prochlorococcus marinus (strain MIT 9313).